A 488-amino-acid polypeptide reads, in one-letter code: Katanin p60 ATPase-containing subunit A-like 1 (488 aa).

The interval 84–184 is disordered; that stretch reads FPNPVPEEGP…EQKKFDGTGY (101 aa). The span at 144–167 shows a compositional bias: basic and acidic residues; that stretch reads KPDRPNTRDGRGNKAKEEKSKRNA. Residue 246–253 participates in ATP binding; sequence GPPGTGKT.

Belongs to the AAA ATPase family. Katanin p60 subunit A1 subfamily. A-like 1 sub-subfamily.

It is found in the cytoplasm. The protein localises to the cytoskeleton. It localises to the spindle pole. Its subcellular location is the spindle. It catalyses the reaction n ATP + n H2O + a microtubule = n ADP + n phosphate + (n+1) alpha/beta tubulin heterodimers.. Its function is as follows. Regulates microtubule dynamics in Sertoli cells, a process that is essential for spermiogenesis and male fertility. Severs microtubules in an ATP-dependent manner, promoting rapid reorganization of cellular microtubule arrays. The polypeptide is Katanin p60 ATPase-containing subunit A-like 1 (katnal1) (Danio rerio (Zebrafish)).